The primary structure comprises 353 residues: 3-ketosteroid-9-alpha-monooxygenase, ferredoxin reductase component (353 aa).

Residues 8–117 (SHVLELQVAE…LAPSGTFVPK (110 aa)) enclose the FAD-binding FR-type domain. A 2Fe-2S ferredoxin-type domain is found at 264–353 (ATAVVTLDGT…SDSVEVTYDE (90 aa)). Residues cysteine 300, cysteine 305, cysteine 308, and cysteine 338 each coordinate [2Fe-2S] cluster.

As to quaternary structure, monomer. The two-component system 3-ketosteroid-9-alpha-monooxygenase is composed of an oxygenase component KshA and a reductase component KshB. FAD is required as a cofactor. [2Fe-2S] cluster serves as cofactor.

It carries out the reaction androsta-1,4-diene-3,17-dione + 2 reduced [2Fe-2S]-[ferredoxin] + O2 + 2 H(+) = 9alpha-hydroxyandrosta-1,4-diene-3,17-dione + 2 oxidized [2Fe-2S]-[ferredoxin] + H2O. It functions in the pathway lipid metabolism; steroid biosynthesis. Involved in the degradation of cholesterol. Catalyzes the introduction of a 9a-hydroxyl moiety into 1,4-androstadiene-3,17-dione (ADD) to yield the 9alpha-hydroxy-1,4-androstadiene-3,17-dione (9OHADD) intermediate which spontaneously form 3-hydroxy-9,10-seconandrost-1,3,5(10)-triene-9,17-dione (HSA) via the meta-cleavage of ring B with concomitant aromatization of ring A. The sequence is that of 3-ketosteroid-9-alpha-monooxygenase, ferredoxin reductase component (kshB) from Mycolicibacterium smegmatis (strain ATCC 700084 / mc(2)155) (Mycobacterium smegmatis).